The chain runs to 180 residues: Large ribosomal subunit protein uL5 (180 aa).

Belongs to the universal ribosomal protein uL5 family. In terms of assembly, part of the 50S ribosomal subunit; part of the 5S rRNA/L5/L18/L25 subcomplex. Contacts the 5S rRNA and the P site tRNA. Forms a bridge to the 30S subunit in the 70S ribosome.

Its function is as follows. This is one of the proteins that bind and probably mediate the attachment of the 5S RNA into the large ribosomal subunit, where it forms part of the central protuberance. In the 70S ribosome it contacts protein S13 of the 30S subunit (bridge B1b), connecting the 2 subunits; this bridge is implicated in subunit movement. Contacts the P site tRNA; the 5S rRNA and some of its associated proteins might help stabilize positioning of ribosome-bound tRNAs. The polypeptide is Large ribosomal subunit protein uL5 (Xanthomonas euvesicatoria pv. vesicatoria (strain 85-10) (Xanthomonas campestris pv. vesicatoria)).